Here is a 279-residue protein sequence, read N- to C-terminus: Urease accessory protein UreD (279 aa).

The protein belongs to the UreD family. As to quaternary structure, ureD, UreF and UreG form a complex that acts as a GTP-hydrolysis-dependent molecular chaperone, activating the urease apoprotein by helping to assemble the nickel containing metallocenter of UreC. The UreE protein probably delivers the nickel.

Its subcellular location is the cytoplasm. Its function is as follows. Required for maturation of urease via the functional incorporation of the urease nickel metallocenter. This is Urease accessory protein UreD from Streptococcus thermophilus (strain ATCC BAA-250 / LMG 18311).